Consider the following 267-residue polypeptide: Acyl-[acyl-carrier-protein]--UDP-N-acetylglucosamine O-acyltransferase (267 aa).

Belongs to the transferase hexapeptide repeat family. LpxA subfamily. In terms of assembly, homotrimer.

The protein resides in the cytoplasm. It carries out the reaction a (3R)-hydroxyacyl-[ACP] + UDP-N-acetyl-alpha-D-glucosamine = a UDP-3-O-[(3R)-3-hydroxyacyl]-N-acetyl-alpha-D-glucosamine + holo-[ACP]. The protein operates within glycolipid biosynthesis; lipid IV(A) biosynthesis; lipid IV(A) from (3R)-3-hydroxytetradecanoyl-[acyl-carrier-protein] and UDP-N-acetyl-alpha-D-glucosamine: step 1/6. Functionally, involved in the biosynthesis of lipid A, a phosphorylated glycolipid that anchors the lipopolysaccharide to the outer membrane of the cell. This Cupriavidus pinatubonensis (strain JMP 134 / LMG 1197) (Cupriavidus necator (strain JMP 134)) protein is Acyl-[acyl-carrier-protein]--UDP-N-acetylglucosamine O-acyltransferase.